The sequence spans 2068 residues: Lipoxygenase homology domain-containing protein 1 (2068 aa).

15 PLAT domains span residues 43 to 160 (KVYE…RDLL), 172 to 287 (NKYE…RDIL), 296 to 412 (ITYI…RQLY), 425 to 540 (YPWS…REMT), 553 to 673 (ARYR…RELL), 684 to 803 (FRYH…VELY), 814 to 934 (VHYE…RELL), 970 to 1088 (TTFS…RDLF), 1101 to 1226 (VPYE…RELV), 1255 to 1373 (VLYS…RLFY), 1422 to 1540 (IPYY…RVFD), 1553 to 1668 (VLYE…CEIC), 1680 to 1798 (TSYT…RDFA), 1811 to 1932 (TTYE…VFEV), and 1949 to 2065 (VKYE…RELF).

Expressed in the inner ear, specifically in hair cells. Higher expression is detected in the cochlea.

It is found in the cell projection. The protein resides in the stereocilium. Its function is as follows. Required for normal function of hair cells in the inner ear. The protein is Lipoxygenase homology domain-containing protein 1 (Loxhd1) of Mus musculus (Mouse).